Consider the following 423-residue polypeptide: D-tagatose-1,6-bisphosphate aldolase subunit GatZ (423 aa).

The protein belongs to the GatZ/KbaZ family. GatZ subfamily. Forms a complex with GatY.

It functions in the pathway carbohydrate metabolism; D-tagatose 6-phosphate degradation; D-glyceraldehyde 3-phosphate and glycerone phosphate from D-tagatose 6-phosphate: step 2/2. Functionally, component of the tagatose-1,6-bisphosphate aldolase GatYZ that is required for full activity and stability of the Y subunit. Could have a chaperone-like function for the proper and stable folding of GatY. When expressed alone, GatZ does not show any aldolase activity. Is involved in the catabolism of galactitol. This chain is D-tagatose-1,6-bisphosphate aldolase subunit GatZ, found in Salmonella choleraesuis (strain SC-B67).